The primary structure comprises 300 residues: Virginiamycin B lyase (300 aa).

Substrate is bound at residue H231. E270 is a binding site for Mg(2+). H272 (proton acceptor) is an active-site residue. E287 contributes to the Mg(2+) binding site.

It belongs to the Vgb family. Monomer. Mg(2+) is required as a cofactor.

Inactivates the type B streptogramin antibiotics by linearizing the lactone ring at the ester linkage, generating a free phenylglycine carboxylate and converting the threonyl moiety into 2-amino-butenoic acid. This Saccharopolyspora erythraea (strain ATCC 11635 / DSM 40517 / JCM 4748 / NBRC 13426 / NCIMB 8594 / NRRL 2338) protein is Virginiamycin B lyase.